A 458-amino-acid polypeptide reads, in one-letter code: UDP-N-acetylmuramoylalanine--D-glutamate ligase (458 aa).

124-130 (GSDGKTT) is a binding site for ATP.

This sequence belongs to the MurCDEF family.

Its subcellular location is the cytoplasm. It carries out the reaction UDP-N-acetyl-alpha-D-muramoyl-L-alanine + D-glutamate + ATP = UDP-N-acetyl-alpha-D-muramoyl-L-alanyl-D-glutamate + ADP + phosphate + H(+). Its pathway is cell wall biogenesis; peptidoglycan biosynthesis. Functionally, cell wall formation. Catalyzes the addition of glutamate to the nucleotide precursor UDP-N-acetylmuramoyl-L-alanine (UMA). This Clostridium botulinum (strain Kyoto / Type A2) protein is UDP-N-acetylmuramoylalanine--D-glutamate ligase.